The following is a 401-amino-acid chain: Glutamyl-tRNA reductase (401 aa).

Residues 45-48 (TCNR), Ser101, 106-108 (EDQ), and Gln112 each bind substrate. Cys46 (nucleophile) is an active-site residue. Residue 177–182 (GYGDVG) coordinates NADP(+).

Belongs to the glutamyl-tRNA reductase family. As to quaternary structure, homodimer.

The enzyme catalyses (S)-4-amino-5-oxopentanoate + tRNA(Glu) + NADP(+) = L-glutamyl-tRNA(Glu) + NADPH + H(+). The protein operates within porphyrin-containing compound metabolism; protoporphyrin-IX biosynthesis; 5-aminolevulinate from L-glutamyl-tRNA(Glu): step 1/2. Catalyzes the NADPH-dependent reduction of glutamyl-tRNA(Glu) to glutamate 1-semialdehyde (GSA). The polypeptide is Glutamyl-tRNA reductase (Clostridium botulinum (strain Alaska E43 / Type E3)).